A 745-amino-acid chain; its full sequence is MKETDREAVATAVQRVAGMLQRPDQLDKVEQYRRREARKKASVEARLKAAIQSQLDGVRTGLSQLHNALNDVKDIQQSLADVSKDWRQSINTIESLKDVKDAVVRHSQLAAAVENLKNIFSVPEIVRETQDLIEHGELLQAHRKLMDLECSRDGLMYEQYRMDSGNTRDMTLIHSYFGSTQGLSDELAKQLWMVLQRSLVTVRRDPTLLVSVVRIIEREEKIDRRILDRKKQTGFVPPGRPKNWKEKMFTILDRTVTTRIEGTQADTRESDRMWLVRHLEIIRKYVLDDLIVAKNLLAQCFPPHYEIFRSLLRTYHQALSARMQDLAAEDLEANEIVSLLTWVLNTYTSVEMMGNAELAPEVDVALLEPLLSADVVSALLDTYMSTLTSNIIAWLRKALETDKKDWMKETEPEADQDGYYQTTLPAIVFQMFEQNLQVAAQISEDLKTKVLVLCLQQMNSFLSRYKEEAQLYRDEHLRDRQHPHCYVQYMVAVVNNCQTFKESIVSLKRKYLKHEAEEGVSLSQPSMDGVLDAIAKEGCGSLLEEVFLDLEQHLNELMTKKWLLGSNAVDIICVTVEDYFNDFAKIKKPYRKRMIAEAHRRAVQEYLRAVMQKRISFRSAEERKDGAERMVREAEQLRFLFRKLASGFGEEMDSYCDTIVAVAEVIKLTDPSLLYLEVSTLVSKYPDIRDDHIGALLAMRGDASRDMKQTIIETLEQGPAQASPDYVPIFKDIVVPSLNVAKLLK.

K28 bears the N6-acetyllysine mark.

This sequence belongs to the SEC6 family. As to quaternary structure, the exocyst complex is composed of EXOC1, EXOC2, EXOC3, EXOC4, EXOC5, EXOC6, EXOC7 and EXOC8. Interacts with EXOC3L1. Interacts with BIRC6/bruce. Interacts with MYRIP. Interacts with SLC6A9.

It is found in the cytoplasm. It localises to the perinuclear region. The protein localises to the cell projection. Its subcellular location is the growth cone. The protein resides in the neuron projection. It is found in the midbody. It localises to the golgi apparatus. Component of the exocyst complex involved in the docking of exocytic vesicles with fusion sites on the plasma membrane. This Bos taurus (Bovine) protein is Exocyst complex component 3 (EXOC3).